The sequence spans 172 residues: MDRTAKADLVSTLNGVFNANAVVVVAHYKGLTVADMQKLRSQMKQAGATVKVAKNRLASIALDGTDVASIKPLLKGPTLLAYSSDPVAAAKVAVDFAKTNDKLVILGGAMGTTALNPDGVKALASLPSLDELRAKLVGLIQAPATKVAQVVNAPAAKLARVFGAYAKKDEAA.

Belongs to the universal ribosomal protein uL10 family. As to quaternary structure, part of the ribosomal stalk of the 50S ribosomal subunit. The N-terminus interacts with L11 and the large rRNA to form the base of the stalk. The C-terminus forms an elongated spine to which L12 dimers bind in a sequential fashion forming a multimeric L10(L12)X complex.

Forms part of the ribosomal stalk, playing a central role in the interaction of the ribosome with GTP-bound translation factors. This chain is Large ribosomal subunit protein uL10, found in Methylorubrum extorquens (strain CM4 / NCIMB 13688) (Methylobacterium extorquens).